A 1087-amino-acid polypeptide reads, in one-letter code: Error-prone DNA polymerase 3 (1087 aa).

The segment at 1040-1064 (AGRGDEFAHGSPGSSDTRDKSKPVV) is disordered.

The protein belongs to the DNA polymerase type-C family. DnaE2 subfamily.

The protein localises to the cytoplasm. The catalysed reaction is DNA(n) + a 2'-deoxyribonucleoside 5'-triphosphate = DNA(n+1) + diphosphate. In terms of biological role, DNA polymerase involved in damage-induced mutagenesis and translesion synthesis (TLS). It is not the major replicative DNA polymerase. This chain is Error-prone DNA polymerase 3, found in Agrobacterium fabrum (strain C58 / ATCC 33970) (Agrobacterium tumefaciens (strain C58)).